The chain runs to 103 residues: Large ribosomal subunit protein uL23 (103 aa).

It belongs to the universal ribosomal protein uL23 family. As to quaternary structure, part of the 50S ribosomal subunit. Contacts protein L29, and trigger factor when it is bound to the ribosome.

Its function is as follows. One of the early assembly proteins it binds 23S rRNA. One of the proteins that surrounds the polypeptide exit tunnel on the outside of the ribosome. Forms the main docking site for trigger factor binding to the ribosome. The sequence is that of Large ribosomal subunit protein uL23 from Prochlorococcus marinus (strain NATL1A).